Reading from the N-terminus, the 1857-residue chain is Peripheral-type benzodiazepine receptor-associated protein 1 (1857 aa).

3 disordered regions span residues 1-103 (MEQL…RPED), 284-321 (QRET…QEDA), and 565-629 (PKDL…DTAS). A compositionally biased stretch (basic and acidic residues) spans 55 to 67 (LRSEESSKPKGDG). Positions 87–96 (LGQQASSSGP) are enriched in polar residues. The span at 289-298 (PLPPSWPPGP) shows a compositional bias: pro residues. 2 stretches are compositionally biased toward low complexity: residues 299 to 316 (ALQA…GEAT) and 603 to 616 (SLSN…IHNS). One can recognise an SH3 1 domain in the interval 653 to 720 (ARIQVFLARY…PSNFVERVSD (68 aa)). The segment at 729–789 (PELADLSHSS…PSPEGLGEPP (61 aa)) is disordered. Positions 755–764 (GGQSSVGRSQ) are enriched in low complexity. Fibronectin type-III domains lie at 791 to 882 (VPYP…ARAG), 884 to 976 (VPSQ…TLPA), and 981 to 1081 (APLD…LAPA). Disordered stretches follow at residues 1083–1311 (LPAR…SDEE), 1330–1479 (FSIP…CSRG), and 1501–1601 (YDSE…RGVR). A compositionally biased stretch (low complexity) spans 1098–1116 (ARAPLASASPGPGDPSSPL). The segment covering 1138-1147 (EMAKGSHEDP) has biased composition (basic and acidic residues). The segment covering 1201 to 1218 (ASSSTQGARAQQAPNTEM) has biased composition (polar residues). A compositionally biased stretch (acidic residues) spans 1259–1274 (DIQEEEEEEEEEEEEE). Polar residues predominate over residues 1278–1292 (RTCSFQKQVAGNSIR). Residues 1333–1346 (PEEEEEEEEDEEEE) show a composition bias toward acidic residues. 2 stretches are compositionally biased toward basic and acidic residues: residues 1420–1429 (RPPDPREHCS) and 1554–1586 (AWEK…EARG). Positions 1625–1693 (LPVRIFVALF…PCNMVAEVAV (69 aa)) constitute an SH3 2 domain. 2 disordered regions span residues 1723–1761 (VYST…VPSA) and 1823–1857 (SNFL…RVQC). Positions 1764–1831 (KAPHSMVAAF…PSNFLEGPGP (68 aa)) constitute an SH3 3 domain.

This sequence belongs to the RIMBP family. In terms of assembly, interacts with RIMS1 and RIMS2. Interacts with TSPO. Interacts with CACNA1A. In terms of tissue distribution, predominantly expressed in brain, pituitary gland and thymus in adults. In adult brain, highest expression found in temporal lobe and the putamen, followed by amygdala, caudate nucleus, cerebral cortex, occipital and frontal lobe. A high expression level is also observed in fetal tissues like brain, heart, kidney and thymus.

It localises to the cytoplasm. It is found in the mitochondrion. In terms of biological role, required for synaptic transmission regulation. It probably controls the recruitement of voltage-gated calcium channels to the presynaptic membrane, and modulates neurotransmitter release. The chain is Peripheral-type benzodiazepine receptor-associated protein 1 from Homo sapiens (Human).